We begin with the raw amino-acid sequence, 145 residues long: Large ribosomal subunit protein bL9 (145 aa).

The protein belongs to the bacterial ribosomal protein bL9 family.

In terms of biological role, binds to the 23S rRNA. The sequence is that of Large ribosomal subunit protein bL9 from Ureaplasma urealyticum serovar 10 (strain ATCC 33699 / Western).